Reading from the N-terminus, the 85-residue chain is Putative membrane protein insertion efficiency factor (85 aa).

Belongs to the UPF0161 family.

Its subcellular location is the cell inner membrane. Its function is as follows. Could be involved in insertion of integral membrane proteins into the membrane. In Escherichia fergusonii (strain ATCC 35469 / DSM 13698 / CCUG 18766 / IAM 14443 / JCM 21226 / LMG 7866 / NBRC 102419 / NCTC 12128 / CDC 0568-73), this protein is Putative membrane protein insertion efficiency factor.